The following is a 278-amino-acid chain: Translation initiation factor IF-3, mitochondrial (278 aa).

The transit peptide at 1–31 directs the protein to the mitochondrion; that stretch reads MAALFLKRLTLQTVKSENSCIRCFGKHILQK. The segment at 249-278 is disordered; sequence KAYKETQETQERDTLNKDHGNDKESNVLHQ.

This sequence belongs to the IF-3 family.

It is found in the mitochondrion. IF-3 binds to the 28S ribosomal subunit and shifts the equilibrium between 55S ribosomes and their 39S and 28S subunits in favor of the free subunits, thus enhancing the availability of 28S subunits on which protein synthesis initiation begins. In Homo sapiens (Human), this protein is Translation initiation factor IF-3, mitochondrial (MTIF3).